A 267-amino-acid polypeptide reads, in one-letter code: Trehalose-phosphate phosphatase (267 aa).

Asp20 serves as the catalytic Nucleophile. Mg(2+) contacts are provided by Asp20, Asp22, and Asp198. 20 to 22 (DLD) contributes to the substrate binding site.

Belongs to the trehalose phosphatase family. Mg(2+) is required as a cofactor.

The enzyme catalyses alpha,alpha-trehalose 6-phosphate + H2O = alpha,alpha-trehalose + phosphate. Its pathway is glycan biosynthesis; trehalose biosynthesis. Its function is as follows. Removes the phosphate from trehalose 6-phosphate to produce free trehalose. In Salmonella typhimurium (strain SL1344), this protein is Trehalose-phosphate phosphatase (otsB).